Consider the following 389-residue polypeptide: UDP-N-acetylglucosamine--N-acetylmuramyl-(pentapeptide) pyrophosphoryl-undecaprenol N-acetylglucosamine transferase (389 aa).

UDP-N-acetyl-alpha-D-glucosamine is bound by residues 39–41 (TGG), asparagine 157, arginine 193, serine 221, isoleucine 275, 294–299 (ALTVSE), and glutamine 320.

This sequence belongs to the glycosyltransferase 28 family. MurG subfamily.

The protein resides in the cell inner membrane. The enzyme catalyses di-trans,octa-cis-undecaprenyl diphospho-N-acetyl-alpha-D-muramoyl-L-alanyl-D-glutamyl-meso-2,6-diaminopimeloyl-D-alanyl-D-alanine + UDP-N-acetyl-alpha-D-glucosamine = di-trans,octa-cis-undecaprenyl diphospho-[N-acetyl-alpha-D-glucosaminyl-(1-&gt;4)]-N-acetyl-alpha-D-muramoyl-L-alanyl-D-glutamyl-meso-2,6-diaminopimeloyl-D-alanyl-D-alanine + UDP + H(+). It participates in cell wall biogenesis; peptidoglycan biosynthesis. In terms of biological role, cell wall formation. Catalyzes the transfer of a GlcNAc subunit on undecaprenyl-pyrophosphoryl-MurNAc-pentapeptide (lipid intermediate I) to form undecaprenyl-pyrophosphoryl-MurNAc-(pentapeptide)GlcNAc (lipid intermediate II). The polypeptide is UDP-N-acetylglucosamine--N-acetylmuramyl-(pentapeptide) pyrophosphoryl-undecaprenol N-acetylglucosamine transferase (Saccharophagus degradans (strain 2-40 / ATCC 43961 / DSM 17024)).